The primary structure comprises 590 residues: Kinetochore protein ndc-80 (590 aa).

2 coiled-coil regions span residues 269-342 (KGNE…KQIH) and 450-525 (ELET…MKLD).

Belongs to the NDC80/HEC1 family. As to quaternary structure, component of the NDC80 complex, which is composed of at least ndc-80 and him-10. The NDC80 complex interacts with knl-1. Interacts with the RZZ complex components rod-1 (via N-terminus) and zwl-1.

The protein resides in the nucleus. Its subcellular location is the chromosome. The protein localises to the centromere. It is found in the kinetochore. It localises to the cytoplasm. The protein resides in the cytoskeleton. Its function is as follows. Acts as a component of the essential kinetochore-associated ndc-80 complex, which is required for chromosome segregation in mitosis and meiosis and spindle checkpoint activity. Plays a role in kinetochore assembly and recruits the checkpoint protein mdf-2 and the spindly-like protein spdl-1 to unattached kinetochores. Mediates the formation of end-on kinetochore-microtubule attachments through recruitment of spdl-1. The ndc-80 complex synergistically enhances the affinity of the ska-1 complex for microtubules and may allow the ndc-80 complex to track depolymerizing microtubules. This is Kinetochore protein ndc-80 (ndc-80) from Caenorhabditis elegans.